Reading from the N-terminus, the 218-residue chain is Hypoxanthine-guanine phosphoribosyltransferase (218 aa).

Residue alanine 2 is modified to N-acetylalanine. Lysine 69 provides a ligand contact to GMP. An N6-acetyllysine modification is found at lysine 103. A Glycyl lysine isopeptide (Lys-Gly) (interchain with G-Cter in SUMO1); alternate cross-link involves residue lysine 115. Lysine 115 is covalently cross-linked (Glycyl lysine isopeptide (Lys-Gly) (interchain with G-Cter in SUMO2); alternate). Residues 134 to 142 (EDIIDTGKT), lysine 166, 186 to 188 (KFV), and aspartate 194 contribute to the GMP site. Aspartate 138 acts as the Proton acceptor in catalysis. Threonine 142 bears the Phosphothreonine mark. Aspartate 194 contributes to the Mg(2+) binding site.

This sequence belongs to the purine/pyrimidine phosphoribosyltransferase family. Homotetramer. Requires Mg(2+) as cofactor.

Its subcellular location is the cytoplasm. It catalyses the reaction IMP + diphosphate = hypoxanthine + 5-phospho-alpha-D-ribose 1-diphosphate. It carries out the reaction GMP + diphosphate = guanine + 5-phospho-alpha-D-ribose 1-diphosphate. It functions in the pathway purine metabolism; IMP biosynthesis via salvage pathway; IMP from hypoxanthine: step 1/1. Functionally, converts guanine to guanosine monophosphate, and hypoxanthine to inosine monophosphate. Transfers the 5-phosphoribosyl group from 5-phosphoribosylpyrophosphate onto the purine. Plays a central role in the generation of purine nucleotides through the purine salvage pathway. This is Hypoxanthine-guanine phosphoribosyltransferase (HPRT1) from Sus scrofa (Pig).